A 118-amino-acid chain; its full sequence is Elongin-B (118 aa).

Methionine 1 is modified (N-acetylmethionine). The 79-residue stretch at 1–79 (MDVFLMIRRH…QAPATVGLAF (79 aa)) folds into the Ubiquitin-like domain. Threonine 84 bears the Phosphothreonine mark. Residues 91–118 (EPFSSPPELPDVMKPQDSGGSANEQAVQ) form a disordered region. A phosphoserine mark is found at serine 108 and serine 111. The segment covering 108–118 (SGGSANEQAVQ) has biased composition (polar residues).

Belongs to the Elongin B family. Heterotrimer of an A (ELOA, ELOA2 or ELOA3P), ELOB and ELOC subunit. The elongin BC complex interacts with EPOP; leading to recruit the elongin BC complex to Polycomb group (PcG) target genes, thereby restricting excessive activity of the PRC2/EED-EZH2 complex. Component of multiple cullin-RING E3 ubiquitin-protein ligase complexes composed of Elongin BC (ELOB and ELOC), a cullin (either CUL2 or CUL5), a catalytic subunit (either RBX1 or RNF7/RBX2), as well as a substrate adapter protein that can be either ASB2, ASB9, ASB11, KLHDC2, KLHDC3, KLHDC10, APPBP2, FEM1A, FEM1B, FEM1C, LRR1, PCMTD1, SOCS1, SOCS2, SOCS5, SPSB1, SPSB3, ELOA, VHL, WSB1 or RAB40C. As part of the Elongin BC E3 ubiquitin ligase complex; interacts with NRBP1. May also interact with DCUN1D1, DCUN1D2, DCUN1D3 and DCUN1D5. May form oligomers as a KLHDC2/KLHDC3-ELOB-ELOC complex; this interaction is autoinhibitory for the E3 ligase complex as the substrate-binding site of KLHDC2/KLHDC3 is blocked in the oligomer.

It localises to the nucleus. Its pathway is protein modification; protein ubiquitination. In terms of biological role, SIII, also known as elongin, is a general transcription elongation factor that increases the RNA polymerase II transcription elongation past template-encoded arresting sites. Subunit A is transcriptionally active and its transcription activity is strongly enhanced by binding to the dimeric complex of the SIII regulatory subunits B and C (elongin BC complex). In embryonic stem cells, the elongin BC complex is recruited by EPOP to Polycomb group (PcG) target genes in order generate genomic region that display both active and repressive chromatin properties, an important feature of pluripotent stem cells. Functionally, core component of multiple cullin-2 and cullin-5-RING E3 ubiquitin-protein ligase complexes (ECS complexes), which mediate the ubiquitination of target proteins. By binding to BC-box motifs it seems to link target recruitment subunits, like VHL and members of the SOCS box family, to Cullin/RBX1 modules that activate E2 ubiquitination enzymes. Component the von Hippel-Lindau ubiquitination complex CBC(VHL). A number of ECS complexes (containing either KLHDC2, KLHDC3, KLHDC10, APPBP2, FEM1A, FEM1B or FEM1C as substrate-recognition component) are part of the DesCEND (destruction via C-end degrons) pathway, which recognizes a C-degron located at the extreme C terminus of target proteins, leading to their ubiquitination and degradation. The ECS(ASB9) complex mediates ubiquitination and degradation of CKB. As part of a multisubunit ubiquitin ligase complex, polyubiquitinates monoubiquitinated POLR2A. ECS(LRR1) ubiquitinates MCM7 and promotes CMG replisome disassembly by VCP and chromatin extraction during S-phase. As part of the ECS(RAB40C) complex, mediates ANKRD28 ubiquitination and degradation, thereby inhibiting protein phosphatase 6 (PP6) complex activity and focal adhesion assembly during cell migration. The protein is Elongin-B of Mus musculus (Mouse).